The primary structure comprises 740 residues: Arf-GAP with coiled-coil, ANK repeat and PH domain-containing protein 1 (740 aa).

Residues 1–226 form the BAR domain; it reads MTVKLDFEEC…RKELGAQLHQ (226 aa). Residues 1–382 form a required for formation of endosomal tubules when overexpressed with PIP5K1C region; it reads MTVKLDFEEC…RGPGQGSGHL (382 aa). A PH domain is found at 265–360; the sequence is GLVMEGHLFK…WVSAVQSSIA (96 aa). In terms of domain architecture, Arf-GAP spans 405–527; sequence GHVVAQVQSV…KFLTKLPEIR (123 aa). The interval 405 to 740 is required for interaction with GULP1; the sequence is GHVVAQVQSV…SRRSHDLHTL (336 aa). The segment at 420–443 adopts a C4-type zinc-finger fold; sequence CCDCREPAPEWASINLGVTLCIQC. Residue Tyr485 is modified to 3'-nitrotyrosine. A prevents interaction with ITGB1 when S-554 is not phosphorylated region spans residues 525-566; sequence EIRGRRGGRGRPRGQPPVPPKPSIRPRPGSLRSKPEPPSEDL. Positions 525 to 581 are disordered; sequence EIRGRRGGRGRPRGQPPVPPKPSIRPRPGSLRSKPEPPSEDLGSLHPGALLFRASGH. The span at 538 to 549 shows a compositional bias: pro residues; it reads GQPPVPPKPSIR. Ser554 bears the Phosphoserine; by PKB mark. ANK repeat units follow at residues 606–635, 639–668, and 672–702; these read DNAT…NVNQ, AGRG…DLGA, and EGRD…EAEA.

Banana-shaped homodimer laterally assembling into tetramers, the tetramers further pack helically onto the membrane. Interacts with GTP-bound ARF6. Interacts with third cytoplasmic loop of SLC2A4/GLUT4. Interacts with CLTC. Interacts with GULP1. Forms a complex with GDP-bound ARF6 and GULP1. Interacts with ITGB1; required for ITGB1 recycling. Phosphorylation at Ser-554 by PKB is required for interaction with ITGB1, export of ITGB1 from recycling endosomes to the cell surface and ITGB1-dependent cell migration. In terms of tissue distribution, highest level in lung and spleen. Low level in heart, kidney, liver and pancreas.

Its subcellular location is the recycling endosome membrane. With respect to regulation, GAP activity stimulated by phosphatidylinositol 4,5-bisphosphate (PIP2) and phosphatidic acid. GTPase-activating protein (GAP) for ADP ribosylation factor 6 (ARF6) required for clathrin-dependent export of proteins from recycling endosomes to trans-Golgi network and cell surface. Required for regulated export of ITGB1 from recycling endosomes to the cell surface and ITGB1-dependent cell migration. This is Arf-GAP with coiled-coil, ANK repeat and PH domain-containing protein 1 (ACAP1) from Homo sapiens (Human).